A 378-amino-acid chain; its full sequence is Alpha-D-ribose 1-methylphosphonate 5-triphosphate diphosphatase (378 aa).

The protein belongs to the metallo-dependent hydrolases superfamily.

It carries out the reaction alpha-D-ribose 1-methylphosphonate 5-triphosphate + H2O = alpha-D-ribose 1-methylphosphonate 5-phosphate + diphosphate + H(+). Its function is as follows. Catalyzes the hydrolysis of alpha-D-ribose 1-methylphosphonate triphosphate (RPnTP) to form alpha-D-ribose 1-methylphosphonate phosphate (PRPn) and diphosphate. The polypeptide is Alpha-D-ribose 1-methylphosphonate 5-triphosphate diphosphatase (phnM) (Escherichia coli (strain K12)).